Consider the following 218-residue polypeptide: Peptide deformylase 1 (218 aa).

C126 and H168 together coordinate Fe cation. E169 is an active-site residue. Position 172 (H172) interacts with Fe cation.

The protein belongs to the polypeptide deformylase family. The cofactor is Fe(2+).

The enzyme catalyses N-terminal N-formyl-L-methionyl-[peptide] + H2O = N-terminal L-methionyl-[peptide] + formate. Functionally, removes the formyl group from the N-terminal Met of newly synthesized proteins. Requires at least a dipeptide for an efficient rate of reaction. N-terminal L-methionine is a prerequisite for activity but the enzyme has broad specificity at other positions. The sequence is that of Peptide deformylase 1 from Streptomyces coelicolor (strain ATCC BAA-471 / A3(2) / M145).